The sequence spans 168 residues: Endoribonuclease YbeY (168 aa).

H125, H129, and H135 together coordinate Zn(2+).

It belongs to the endoribonuclease YbeY family. Zn(2+) is required as a cofactor.

The protein localises to the cytoplasm. In terms of biological role, single strand-specific metallo-endoribonuclease involved in late-stage 70S ribosome quality control and in maturation of the 3' terminus of the 16S rRNA. The sequence is that of Endoribonuclease YbeY from Rhodopseudomonas palustris (strain BisB18).